The sequence spans 343 residues: L-threonine 3-dehydrogenase (343 aa).

A Zn(2+)-binding site is contributed by Cys39. Residues Thr41 and His44 each act as charge relay system in the active site. Zn(2+) is bound by residues His64, Glu65, Cys94, Cys97, Cys100, and Cys108. NAD(+)-binding positions include Ile176, Asp196, Arg201, 263-265 (LGI), and 287-288 (IY).

The protein belongs to the zinc-containing alcohol dehydrogenase family. In terms of assembly, homotetramer. Zn(2+) is required as a cofactor.

It is found in the cytoplasm. The enzyme catalyses L-threonine + NAD(+) = (2S)-2-amino-3-oxobutanoate + NADH + H(+). It functions in the pathway amino-acid degradation; L-threonine degradation via oxydo-reductase pathway; glycine from L-threonine: step 1/2. Catalyzes the NAD(+)-dependent oxidation of L-threonine to 2-amino-3-ketobutyrate. The sequence is that of L-threonine 3-dehydrogenase from Anaeromyxobacter sp. (strain Fw109-5).